The sequence spans 951 residues: Serine/threonine-protein kinase 10 (951 aa).

A Protein kinase domain is found at 36–294 (WEIIGELGDG…AAQLLEHPFV (259 aa)). ATP is bound by residues 42 to 50 (LGDGAFGKV) and lysine 65. Aspartate 157 (proton acceptor) is an active-site residue. Acidic residues predominate over residues 319–330 (EENGEVEEEEAS). The segment at 319–479 (EENGEVEEEE…DSGSNSASES (161 aa)) is disordered. Residues 331–343 (DTPSSNKSVSQSA) show a composition bias toward polar residues. The segment covering 345–356 (GEKDKHTGKEHV) has biased composition (basic and acidic residues). Residues 364-373 (PQNTDSQADI) show a composition bias toward polar residues. 2 stretches are compositionally biased toward basic and acidic residues: residues 374-394 (HSQK…HDAV) and 410-427 (HEPK…EEHG). Residues 429-443 (AVSSNQRPKSSQSDR) are compositionally biased toward polar residues. 3 positions are modified to phosphoserine; by PLK1: serine 483, serine 487, and serine 491. Residues 583-723 (EQEMNSKRKF…NKKQQLLRDR (141 aa)) adopt a coiled-coil conformation. Positions 785 to 800 (QERARLPKNQKAEAKT) are enriched in basic and acidic residues. Residues 785–804 (QERARLPKNQKAEAKTRMTM) form a disordered region. The stretch at 898 to 928 (RENLRPRKKALEDELEHKKEEQEMFFRMNEE) forms a coiled coil. The interval 930 to 951 (AGHPFPSNKPAKFYSFSSPEAS) is disordered.

This sequence belongs to the protein kinase superfamily. STE Ser/Thr protein kinase family. STE20 subfamily. In terms of assembly, homodimer. Autophosphorylates. Phosphorylated by plk1/plx1, suggesting the existence of a feedback loop with plk1/plx1. activation of the protein.

It is found in the cell membrane. It catalyses the reaction L-seryl-[protein] + ATP = O-phospho-L-seryl-[protein] + ADP + H(+). The enzyme catalyses L-threonyl-[protein] + ATP = O-phospho-L-threonyl-[protein] + ADP + H(+). Its function is as follows. May act as a polo kinase kinase by mediating phosphorylation of plk1/plx1 and subsequent activation of plk1/plx1 during oocyte maturation. The sequence is that of Serine/threonine-protein kinase 10 (stk10) from Xenopus tropicalis (Western clawed frog).